Reading from the N-terminus, the 662-residue chain is Zinc finger protein 17 (662 aa).

The KRAB domain maps to 8–101; sequence MVFEDVAIHF…LLKDILHLAE (94 aa). 16 C2H2-type zinc fingers span residues 190–212, 218–240, 246–268, 274–296, 302–324, 358–380, 386–408, 414–436, 442–464, 470–492, 498–520, 526–548, 554–576, 582–604, 610–632, and 638–660; these read YSCT…QKIH, YECS…QRNH, YKCS…QKIH, YECS…QRIH, YVCS…QKIH, FYCC…QRVH, YECN…QKVH, YECS…QRVH, YECN…QRVH, FECS…QRIH, YECS…RRNH, FECT…QKVH, YKCS…ERVH, YECS…RRIH, and YQCS…QKVH.

It belongs to the krueppel C2H2-type zinc-finger protein family.

The protein resides in the nucleus. May be involved in transcriptional regulation. The chain is Zinc finger protein 17 (ZNF17) from Homo sapiens (Human).